Reading from the N-terminus, the 126-residue chain is UPF0102 protein MXAN_3551 (126 aa).

The protein belongs to the UPF0102 family.

The polypeptide is UPF0102 protein MXAN_3551 (Myxococcus xanthus (strain DK1622)).